Here is a 906-residue protein sequence, read N- to C-terminus: Glutamate receptor 1 (906 aa).

The N-terminal stretch at 1–18 (MQHIFAFFCTGFLGAVVG) is a signal peptide. At 19-536 (ANFPNNIQIG…GVFSFLDPLA (518 aa)) the chain is on the extracellular side. N-linked (GlcNAc...) asparagine glycosylation is found at asparagine 63, asparagine 249, asparagine 257, asparagine 363, asparagine 401, and asparagine 406. The cysteines at positions 75 and 323 are disulfide-linked. 3 residues coordinate L-glutamate: proline 492, threonine 494, and arginine 499. Residues 537–557 (YEIWMCIVFAYIGVSVVLFLV) form a helical membrane-spanning segment. Residues 558 to 584 (SRFSPYEWHSEEFEEGRDQTTSDQSNE) are Cytoplasmic-facing. The helical; Pore-forming intramembrane region spans 585-600 (FGIFNSLWFSLGAFMQ). The stretch at 601 to 603 (QGC) is an intramembrane region. Cysteine 603 is lipidated: S-palmitoyl cysteine. Residues 604–609 (DISPRS) are Cytoplasmic-facing. A helical membrane pass occupies residues 610 to 630 (LSGRIVGGVWWFFTLIIISSY). Residues 631–805 (TANLAAFLTV…DKTSALSLSN (175 aa)) lie on the Extracellular side of the membrane. At serine 645 the chain carries Phosphoserine. Residues serine 668 and threonine 669 each contribute to the L-glutamate site. The residue at position 710 (serine 710) is a Phosphoserine. Glutamate 719 is a binding site for L-glutamate. An intrachain disulfide couples cysteine 732 to cysteine 787. A helical membrane pass occupies residues 806–826 (VAGVFYILIGGLGLAMLVALI). Topologically, residues 827 to 906 (EFCYKSRSES…SGMPLGATGL (80 aa)) are cytoplasmic. A lipid anchor (S-palmitoyl cysteine) is attached at cysteine 829. Phosphoserine is present on residues serine 849 and serine 863. A disordered region spans residues 861 to 880 (RNSGAGASSAGSGENGRVVS). Low complexity predominate over residues 863–872 (SGAGASSAGS). Positions 903–906 (ATGL) match the PDZ-binding motif.

The protein belongs to the glutamate-gated ion channel (TC 1.A.10.1) family. GRIA1 subfamily. In terms of assembly, homotetramer or heterotetramer of pore-forming glutamate receptor subunits; heteromeric assembly can be the result of both receptor subtype and flip-flop forms and according the composition, one partner can be dominant with respect to the fast desensitizing current component, whereas the other can determine the steady-state component. Tetramers may be formed by the dimerization of dimers. Found in a complex with GRIA2, GRIA3, GRIA4, CNIH2, CNIH3, CACNG2, CACNG3, CACNG4, CACNG5, CACNG7 and CACNG8. Interacts with HIP1 and RASGRF2. Interacts with SYNDIG1 and GRIA2. Interacts with DLG1 (via C-terminus). Interacts with LRFN1. Interacts with PRKG2. Interacts with CNIH2 and CACNG2. Interacts with CACNG5; this interaction modulates the gating. Interacts (via C-terminus) with PDLIM4 (via LIM domain); this interaction as well as the interaction of PDLIM4 with alpha-actinin is required for their colocalization in early endosomes. Interacts with SNX27 (via PDZ domain); the interaction is required for recycling to the plasma membrane when endocytosed and prevent degradation in lysosomes. Interacts (via PDZ-binding motif) with SHANK3 (via PDZ domain). Interacts with CACNG3; associates GRIA1 with the adapter protein complex 4 (AP-4) to target GRIA1 to the somatodendritic compartment of neurons. Interacts with CACNG2; this interaction mediates traffick to the plasma membrane and modulation of desensitization. Interaction with CNIH2 and CNIH3; this interaction promotes expression at the plasma membrane and extensively modulates their gating properties by slowing deactivation and desensitization kinetics. Found in a complex with GRIA2, GRIA3, GRIA4, DLG4, CACNG8 and CNIH2. In terms of processing, phosphorylated at Ser-645. Phosphorylated at Ser-710 by PKC. Phosphorylated at Ser-849 by PKC, PKA and CAMK2. Phosphorylated at Ser-863 by PKC, PKA and PRKG2. Phosphorylation of Ser-863 is reduced by induction of long-term depression and increased by induction of long-term potentiation. Palmitoylated. Depalmitoylated by CPT1C and upon L-glutamate stimulation. ZDHHC3/GODZ specifically palmitoylates Cys-603, which leads to Golgi retention and decreased cell surface expression. In contrast, Cys-829 palmitoylation does not affect cell surface expression but regulates stimulation-dependent endocytosis.

It is found in the cell membrane. The protein localises to the endoplasmic reticulum membrane. It localises to the postsynaptic cell membrane. The protein resides in the postsynaptic density membrane. Its subcellular location is the cell projection. It is found in the dendrite. The protein localises to the dendritic spine. It localises to the early endosome membrane. The protein resides in the recycling endosome membrane. Its subcellular location is the presynapse. It is found in the synapse. The catalysed reaction is Ca(2+)(in) = Ca(2+)(out). It catalyses the reaction Na(+)(in) = Na(+)(out). The enzyme catalyses Mg(2+)(in) = Mg(2+)(out). It carries out the reaction Li(+)(in) = Li(+)(out). The catalysed reaction is K(+)(in) = K(+)(out). It catalyses the reaction Sr(2+)(in) = Sr(2+)(out). In terms of biological role, ionotropic glutamate receptor that functions as a ligand-gated cation channel, gated by L-glutamate and glutamatergic agonists such as alpha-amino-3-hydroxy-5-methyl-4-isoxazolepropionic acid (AMPA), quisqualic acid, and kainic acid. L-glutamate acts as an excitatory neurotransmitter at many synapses in the central nervous system. Binding of the excitatory neurotransmitter L-glutamate induces a conformation change, leading to the opening of the cation channel, and thereby converts the chemical signal to an electrical impulse upon entry of monovalent and divalent cations such as sodium and calcium. The receptor then desensitizes rapidly and enters in a transient inactive state, characterized by the presence of bound agonist. In the presence of CACNG2 or CACNG4 or CACNG7 or CACNG8, shows resensitization which is characterized by a delayed accumulation of current flux upon continued application of L-glutamate. Calcium (Ca(2+)) permeability depends on subunits composition and, heteromeric channels containing edited GRIA2 subunit are calcium-impermeable. Also permeable to other divalents cations such as strontium(2+) and magnesium(2+) and monovalent cations such as potassium(1+) and lithium(1+). The sequence is that of Glutamate receptor 1 from Macaca fascicularis (Crab-eating macaque).